We begin with the raw amino-acid sequence, 795 residues long: Lon protease (795 aa).

The Lon N-terminal domain occupies 11–203 (GRVIPVSDIV…KFIDYLLKQK (193 aa)). 356–363 (GPPGVGKT) contributes to the ATP binding site. The Lon proteolytic domain occupies 593–771 (DNVPGVVTGL…EDVLRETLGI (179 aa)). Active-site residues include Ser-677 and Lys-720.

This sequence belongs to the peptidase S16 family. In terms of assembly, homohexamer. Organized in a ring with a central cavity.

The protein resides in the cytoplasm. The enzyme catalyses Hydrolysis of proteins in presence of ATP.. Its function is as follows. ATP-dependent serine protease that mediates the selective degradation of mutant and abnormal proteins as well as certain short-lived regulatory proteins. Required for cellular homeostasis and for survival from DNA damage and developmental changes induced by stress. Degrades polypeptides processively to yield small peptide fragments that are 5 to 10 amino acids long. Binds to DNA in a double-stranded, site-specific manner. This Clostridium beijerinckii (strain ATCC 51743 / NCIMB 8052) (Clostridium acetobutylicum) protein is Lon protease.